The sequence spans 165 residues: Protein SprT (165 aa).

In terms of domain architecture, SprT-like spans 20 to 162; the sequence is EKLAQANLKL…YRCVHCGEQL (143 aa). H78 contacts Zn(2+). E79 is an active-site residue. H82 serves as a coordination point for Zn(2+).

This sequence belongs to the SprT family. Zn(2+) is required as a cofactor.

Its subcellular location is the cytoplasm. The sequence is that of Protein SprT from Escherichia coli (strain SMS-3-5 / SECEC).